The chain runs to 587 residues: Barrierpepsin (587 aa).

A signal peptide spans 1–24; sequence MSAINHLCLKLILASFAIINTITA. The Peptidase A1 domain maps to 45 to 393; sequence YATTLDIGTP…DLDNYKISLA (349 aa). Residue D63 is part of the active site. N84, N90, and N268 each carry an N-linked (GlcNAc...) asparagine glycan. D287 is an active-site residue. Residue N308 is glycosylated (N-linked (GlcNAc...) asparagine). C322 and C358 are oxidised to a cystine. N-linked (GlcNAc...) asparagine glycans are attached at residues N366, N398, N468, N503, and N551. Residues 466–505 are disordered; sequence SRNCSTKMPGTRSTTVLSKPTQNSAMHQSTGAVTQTSNET.

Belongs to the peptidase A1 family.

The protein resides in the secreted. It carries out the reaction Selective cleavage of 6-Leu-|-Lys-7 bond in the pheromone alpha-mating factor.. Its function is as follows. This protein called 'barrier activity' is excreted by yeast cells mating type a. It is probably a protease that cleaves alpha-factor and thus acts as an antagonist of this mating pheromone and establishes optimal pheromone concentration for conjugation. The polypeptide is Barrierpepsin (BAR1) (Saccharomyces cerevisiae (strain ATCC 204508 / S288c) (Baker's yeast)).